The chain runs to 224 residues: Oocyte zinc finger protein XlCOF6.1 (224 aa).

C2H2-type zinc fingers lie at residues 6–28 (FSCSVCGKCFALKTELTIHCRSH), 34–56 (FHCTECGKYFQHRSNLRRHQRYH), 62–84 (FTCFECGTCFVNYSWLMLHIRMH), 90–112 (FSCSECGKRFARRSVLEAHQKIH), 118–140 (FSCSECGKGFIKQCDLARHYRTH), 146–168 (FPCPECGKCFTQSMQLIRHRRTH), 174–196 (FACSECGKCFAQNSHLTQHRLGH), and 202–224 (FSCSECGKCFSRRSHLIAHLKSH).

Belongs to the krueppel C2H2-type zinc-finger protein family.

It is found in the nucleus. Its function is as follows. May be involved in transcriptional regulation. This chain is Oocyte zinc finger protein XlCOF6.1, found in Xenopus laevis (African clawed frog).